Here is a 155-residue protein sequence, read N- to C-terminus: S-ribosylhomocysteine lyase (155 aa).

Fe cation-binding residues include His-53, His-57, and Cys-121.

This sequence belongs to the LuxS family. As to quaternary structure, homodimer. Requires Fe cation as cofactor.

It carries out the reaction S-(5-deoxy-D-ribos-5-yl)-L-homocysteine = (S)-4,5-dihydroxypentane-2,3-dione + L-homocysteine. Involved in the synthesis of autoinducer 2 (AI-2) which is secreted by bacteria and is used to communicate both the cell density and the metabolic potential of the environment. The regulation of gene expression in response to changes in cell density is called quorum sensing. Catalyzes the transformation of S-ribosylhomocysteine (RHC) to homocysteine (HC) and 4,5-dihydroxy-2,3-pentadione (DPD). In Thermus thermophilus (strain ATCC BAA-163 / DSM 7039 / HB27), this protein is S-ribosylhomocysteine lyase.